A 173-amino-acid polypeptide reads, in one-letter code: Peptide methionine sulfoxide reductase MsrA (173 aa).

Cys10 is a catalytic residue.

The protein belongs to the MsrA Met sulfoxide reductase family.

The catalysed reaction is L-methionyl-[protein] + [thioredoxin]-disulfide + H2O = L-methionyl-(S)-S-oxide-[protein] + [thioredoxin]-dithiol. The enzyme catalyses [thioredoxin]-disulfide + L-methionine + H2O = L-methionine (S)-S-oxide + [thioredoxin]-dithiol. Has an important function as a repair enzyme for proteins that have been inactivated by oxidation. Catalyzes the reversible oxidation-reduction of methionine sulfoxide in proteins to methionine. The chain is Peptide methionine sulfoxide reductase MsrA from Nautilia profundicola (strain ATCC BAA-1463 / DSM 18972 / AmH).